The following is a 278-amino-acid chain: Small ribosomal subunit protein uS2 (278 aa).

The segment at 235-278 (QRRKDHGEGGQQAAGGGRGQRDEINVYQGGRGGRGGGPRQQQAS) is disordered. 2 stretches are compositionally biased toward gly residues: residues 243–252 (GGQQAAGGGR) and 263–272 (GGRGGRGGGP).

It belongs to the universal ribosomal protein uS2 family.

This is Small ribosomal subunit protein uS2 from Sorangium cellulosum (strain So ce56) (Polyangium cellulosum (strain So ce56)).